Here is a 181-residue protein sequence, read N- to C-terminus: Large ribosomal subunit protein uL5 (181 aa).

This sequence belongs to the universal ribosomal protein uL5 family. Part of the 50S ribosomal subunit; contacts the 5S rRNA and probably tRNA. Forms a bridge to the 30S subunit in the 70S ribosome.

In terms of biological role, this is one of the proteins that bind and probably mediate the attachment of the 5S RNA into the large ribosomal subunit, where it forms part of the central protuberance. In the 70S ribosome it contacts protein S13 of the 30S subunit (bridge B1b), connecting the 2 subunits; this bridge is implicated in subunit movement. May contact the P site tRNA; the 5S rRNA and some of its associated proteins might help stabilize positioning of ribosome-bound tRNAs. The sequence is that of Large ribosomal subunit protein uL5 from Methanococcus maripaludis (strain C7 / ATCC BAA-1331).